A 123-amino-acid polypeptide reads, in one-letter code: UPF0102 protein Mflv_4140 (123 aa).

It belongs to the UPF0102 family.

This is UPF0102 protein Mflv_4140 from Mycolicibacterium gilvum (strain PYR-GCK) (Mycobacterium gilvum (strain PYR-GCK)).